A 368-amino-acid chain; its full sequence is Homoserine O-acetyltransferase (368 aa).

Residues 47-349 (NAILICHALS…SGEGHDSFLL (303 aa)) form the AB hydrolase-1 domain. Catalysis depends on Ser153, which acts as the Nucleophile. Residue Arg221 participates in substrate binding. Catalysis depends on residues Asp311 and His344. Asp345 is a substrate binding site.

The protein belongs to the AB hydrolase superfamily. MetX family. As to quaternary structure, homodimer.

The protein localises to the cytoplasm. It carries out the reaction L-homoserine + acetyl-CoA = O-acetyl-L-homoserine + CoA. Its pathway is amino-acid biosynthesis; L-methionine biosynthesis via de novo pathway; O-acetyl-L-homoserine from L-homoserine: step 1/1. Functionally, transfers an acetyl group from acetyl-CoA to L-homoserine, forming acetyl-L-homoserine. The chain is Homoserine O-acetyltransferase from Leptospira borgpetersenii serovar Hardjo-bovis (strain JB197).